The sequence spans 493 residues: Ribose import ATP-binding protein RbsA (493 aa).

ABC transporter domains are found at residues 3-239 (IEMK…VGRE) and 246-493 (KRTP…TGGR). 35–42 (GENGAGKS) is an ATP binding site.

The protein belongs to the ABC transporter superfamily. Ribose importer (TC 3.A.1.2.1) family. As to quaternary structure, the complex is composed of an ATP-binding protein (RbsA), two transmembrane proteins (RbsC) and a solute-binding protein (RbsB).

It localises to the cell membrane. It carries out the reaction D-ribose(out) + ATP + H2O = D-ribose(in) + ADP + phosphate + H(+). Functionally, part of the ABC transporter complex RbsABC involved in ribose import. Responsible for energy coupling to the transport system. In Bacillus subtilis (strain 168), this protein is Ribose import ATP-binding protein RbsA.